A 184-amino-acid chain; its full sequence is Flavin prenyltransferase UbiX (184 aa).

Residues 9-11, Ser34, 85-88, and Arg120 contribute to the FMN site; these read GAS and SMKT. Dimethylallyl phosphate-binding residues include Tyr150 and Arg166.

Belongs to the UbiX/PAD1 family.

It catalyses the reaction dimethylallyl phosphate + FMNH2 = prenylated FMNH2 + phosphate. Functionally, flavin prenyltransferase that catalyzes the synthesis of the prenylated FMN cofactor (prenyl-FMN) for 4-hydroxy-3-polyprenylbenzoic acid decarboxylase UbiD. The prenyltransferase is metal-independent and links a dimethylallyl moiety from dimethylallyl monophosphate (DMAP) to the flavin N5 and C6 atoms of FMN. The chain is Flavin prenyltransferase UbiX from Methanocaldococcus jannaschii (strain ATCC 43067 / DSM 2661 / JAL-1 / JCM 10045 / NBRC 100440) (Methanococcus jannaschii).